Consider the following 105-residue polypeptide: uncharacterized protein (105 aa).

This is an uncharacterized protein from Homo sapiens (Human).